The primary structure comprises 102 residues: Putative pterin-4-alpha-carbinolamine dehydratase (102 aa).

The protein belongs to the pterin-4-alpha-carbinolamine dehydratase family.

The enzyme catalyses (4aS,6R)-4a-hydroxy-L-erythro-5,6,7,8-tetrahydrobiopterin = (6R)-L-erythro-6,7-dihydrobiopterin + H2O. The sequence is that of Putative pterin-4-alpha-carbinolamine dehydratase from Burkholderia cenocepacia (strain ATCC BAA-245 / DSM 16553 / LMG 16656 / NCTC 13227 / J2315 / CF5610) (Burkholderia cepacia (strain J2315)).